The sequence spans 943 residues: Isoleucine--tRNA ligase (943 aa).

The 'HIGH' region signature appears at 58–68; the sequence is PYANGKIHIGH. Residue glutamate 567 coordinates L-isoleucyl-5'-AMP. A 'KMSKS' region motif is present at residues 608 to 612; sequence KMSKS. Residue lysine 611 coordinates ATP. Zn(2+) is bound by residues cysteine 906, cysteine 909, cysteine 926, and cysteine 929.

The protein belongs to the class-I aminoacyl-tRNA synthetase family. IleS type 1 subfamily. As to quaternary structure, monomer. The cofactor is Zn(2+).

Its subcellular location is the cytoplasm. It carries out the reaction tRNA(Ile) + L-isoleucine + ATP = L-isoleucyl-tRNA(Ile) + AMP + diphosphate. Functionally, catalyzes the attachment of isoleucine to tRNA(Ile). As IleRS can inadvertently accommodate and process structurally similar amino acids such as valine, to avoid such errors it has two additional distinct tRNA(Ile)-dependent editing activities. One activity is designated as 'pretransfer' editing and involves the hydrolysis of activated Val-AMP. The other activity is designated 'posttransfer' editing and involves deacylation of mischarged Val-tRNA(Ile). This chain is Isoleucine--tRNA ligase, found in Pseudomonas putida (strain GB-1).